The sequence spans 208 residues: MIPGILGTKLGMTQIFDESGLAIPVTVIKAGPCILTQIKTQESDSYQAIQIGFSEVKESSLNKPLLGHLKKSQAPALKHLKEYRVKSVEGLEVAQKITLDSFEVGKTVSVSGKTIGKGFAGTVRRYSFTRGPMTHGSKNHREPGSIGQGSTPGKVHKGKKMAGRLGGKQSTIKNLEIVHVNTDNNILVVKGAVPGKKGNILSIQQEEI.

A disordered region spans residues 129-165; the sequence is TRGPMTHGSKNHREPGSIGQGSTPGKVHKGKKMAGRL.

Belongs to the universal ribosomal protein uL3 family. Part of the 50S ribosomal subunit.

Its subcellular location is the plastid. It localises to the chloroplast. Functionally, one of the primary rRNA binding proteins, it binds directly near the 3'-end of the 23S rRNA, where it nucleates assembly of the 50S subunit. The chain is Large ribosomal subunit protein uL3c (rpl3) from Rhodomonas salina (Cryptomonas salina).